A 280-amino-acid polypeptide reads, in one-letter code: Adenosylcobinamide-GDP ribazoletransferase (280 aa).

6 consecutive transmembrane segments (helical) span residues 4-24 (YLLAFKSGFGFLSTIPVGISM), 39-59 (VVGAVLGLLIGAVAFIGQVIF), 61-81 (GPVLAALLMGFIYYITGFNHL), 108-128 (TIGTGGVSFCILLLLTLYGSI), 196-216 (FLIGFVFGAIVCFLPFGWIGL), and 255-275 (TALIILAVLLQLSLNGYMGGF).

This sequence belongs to the CobS family. It depends on Mg(2+) as a cofactor.

It localises to the cell membrane. The enzyme catalyses alpha-ribazole + adenosylcob(III)inamide-GDP = adenosylcob(III)alamin + GMP + H(+). It catalyses the reaction alpha-ribazole 5'-phosphate + adenosylcob(III)inamide-GDP = adenosylcob(III)alamin 5'-phosphate + GMP + H(+). It participates in cofactor biosynthesis; adenosylcobalamin biosynthesis; adenosylcobalamin from cob(II)yrinate a,c-diamide: step 7/7. Joins adenosylcobinamide-GDP and alpha-ribazole to generate adenosylcobalamin (Ado-cobalamin). Also synthesizes adenosylcobalamin 5'-phosphate from adenosylcobinamide-GDP and alpha-ribazole 5'-phosphate. The chain is Adenosylcobinamide-GDP ribazoletransferase from Methanosarcina barkeri (strain Fusaro / DSM 804).